The sequence spans 380 residues: Protein Wnt-5a (380 aa).

The first 37 residues, 1-37 (MKKPIGILSPGVALGTAGGAMSSKFFLMALATFFSFA), serve as a signal peptide directing secretion. Positions 38 to 61 (QVVIEANSWWSLGMNNPVQMSEVY) are excised as a propeptide. Cysteines 104 and 115 form a disulfide. Asn114 and Asn120 each carry an N-linked (GlcNAc...) asparagine glycan. 10 disulfides stabilise this stretch: Cys154–Cys162, Cys164–Cys182, Cys238–Cys252, Cys240–Cys247, Cys309–Cys340, Cys325–Cys335, Cys339–Cys379, Cys355–Cys370, Cys357–Cys367, and Cys362–Cys363. Ser244 carries O-palmitoleoyl serine; by PORCN lipidation. Residues Asn312 and Asn326 are each glycosylated (N-linked (GlcNAc...) asparagine).

This sequence belongs to the Wnt family. Forms a soluble 1:1 complex with AFM; this prevents oligomerization and is required for prolonged biological activity. The complex with AFM may represent the physiological form in body fluids. Homooligomer; disulfide-linked, leading to inactivation. Interacts with PORCN. Interacts with WLS. Interacts with glypican GCP3. Interacts with PKD1 (via extracellular domain). Interacts with TMEM67. In terms of processing, glycosylation is necessary for secretion but not for activity. Post-translationally, palmitoleoylation is required for efficient binding to frizzled receptors. Depalmitoleoylation leads to Wnt signaling pathway inhibition. Proteolytic processing by TIKI1 and TIKI2 promotes oxidation and formation of large disulfide-bond oligomers, leading to inactivation of WNT5A. As to expression, expressed in a gradient at the caudal end of the embryo during gastrulation and later in the distal-most aspect of several structures that extend from the body such as the limbs and genital tubercle.

Its subcellular location is the secreted. The protein resides in the extracellular space. It is found in the extracellular matrix. Its function is as follows. Ligand for members of the frizzled family of seven transmembrane receptors. Can activate or inhibit canonical Wnt signaling, depending on receptor context. In the presence of FZD4, activates beta-catenin signaling. In the presence of ROR2, inhibits the canonical Wnt pathway by promoting beta-catenin degradation through a GSK3-independent pathway which involves down-regulation of beta-catenin-induced reporter gene expression. Suppression of the canonical pathway allows chondrogenesis to occur and inhibits tumor formation. Stimulates cell migration. Decreases proliferation, migration, invasiveness and clonogenicity of carcinoma cells and may act as a tumor suppressor. Mediates motility of melanoma cells. Required during embryogenesis for extension of the primary anterior-posterior axis and for outgrowth of limbs and the genital tubercle. Inhibits type II collagen expression in chondrocytes. The sequence is that of Protein Wnt-5a (Wnt5a) from Mus musculus (Mouse).